Consider the following 186-residue polypeptide: Ribosome maturation factor RimP (186 aa).

This sequence belongs to the RimP family.

The protein resides in the cytoplasm. Required for maturation of 30S ribosomal subunits. This Rhizorhabdus wittichii (strain DSM 6014 / CCUG 31198 / JCM 15750 / NBRC 105917 / EY 4224 / RW1) (Sphingomonas wittichii) protein is Ribosome maturation factor RimP.